Here is a 37-residue protein sequence, read N- to C-terminus: Peptide encoded by miPEP164a (37 aa).

Its function is as follows. Regulatory peptide encoded by the primary transcript (pri-miR164a) of the microRNA miR164a that enhances the accumulation of its corresponding mature miRNA. Acts probably as a transcriptional activator of its corresponding pri-miRNA. The sequence is that of Peptide encoded by miPEP164a from Arabidopsis thaliana (Mouse-ear cress).